A 591-amino-acid polypeptide reads, in one-letter code: Proteasome-associated ATPase (591 aa).

The stretch at 10–77 (VAAAEELHAL…LREEVDRLGQ (68 aa)) forms a coiled coil. 278-283 (GCGKTL) contributes to the ATP binding site. The segment at 590 to 591 (YL) is docks into pockets in the proteasome alpha-ring.

This sequence belongs to the AAA ATPase family. As to quaternary structure, homohexamer. Assembles into a hexameric ring structure that likely caps the 20S proteasome core. Can form a complex composed of two stacked hexameric rings in vitro. Probably interacts with the prokaryotic ubiquitin-like protein Pup through a hydrophobic interface; the expected interacting region of ARC lies in its N-terminal coiled-coil domain. There is likely one Pup binding site per ARC hexamer ring. Upon ATP-binding, the C-terminus of ARC probably interacts with the alpha-rings of the proteasome core, possibly by binding to the intersubunit pockets.

It functions in the pathway protein degradation; proteasomal Pup-dependent pathway. ATPase activity is inhibited by N-ethylmaleimide (NEM) but not by sodium azide. Its function is as follows. ATPase which is responsible for recognizing, binding, unfolding and translocation of pupylated proteins into the bacterial 20S proteasome core particle. May be essential for opening the gate of the 20S proteasome via an interaction with its C-terminus, thereby allowing substrate entry and access to the site of proteolysis. Thus, the C-termini of the proteasomal ATPase may function like a 'key in a lock' to induce gate opening and therefore regulate proteolysis. In Rhodococcus erythropolis (Arthrobacter picolinophilus), this protein is Proteasome-associated ATPase.